The chain runs to 742 residues: Kanadaptin (742 aa).

Polar residues predominate over residues 1–16 (MADILSQSETLASQDL). A disordered region spans residues 1–112 (MADILSQSET…PPWGGPATAP (112 aa)). Positions 27-43 (VSPAARSKAPASSSSNP) are enriched in low complexity. The residue at position 28 (Ser28) is a Phosphoserine. Over residues 72–82 (GDFRSLQEEQS) the composition is skewed to basic and acidic residues. Ser90 carries the phosphoserine modification. The span at 96-106 (RAPPYQEPPWG) shows a compositional bias: pro residues. One can recognise an FHA domain in the interval 135–195 (CLFGRLSGCD…HGTFLNKTRI (61 aa)). Positions 254–282 (LGEDSDEEEEMDTSERKINAGSQDDEMGC) are disordered. The span at 256–265 (EDSDEEEEMD) shows a compositional bias: acidic residues. Ser258 and Ser412 each carry phosphoserine. Lys441 is covalently cross-linked (Glycyl lysine isopeptide (Lys-Gly) (interchain with G-Cter in SUMO2)). Residues 443 to 476 (ETFESLVAKLNDAERELSEISERLKASSQVLSES) adopt a coiled-coil conformation. Ser476 is subject to Phosphoserine. Positions 565 to 742 (LKTGTVGKLP…RTHLNDKYGY (178 aa)) are disordered. Residues 591–606 (PEVEEEEEEEEEEEKE) are compositionally biased toward acidic residues. A compositionally biased stretch (basic and acidic residues) spans 607–619 (KEEHEKKKLEDGS). A phosphoserine mark is found at Ser655 and Ser658. Residues 699–708 (PGPGKLPPTL) are compositionally biased toward low complexity. Over residues 732–742 (GRTHLNDKYGY) the composition is skewed to basic and acidic residues.

Ubiquitously expressed.

It is found in the nucleus. It localises to the cytoplasm. This chain is Kanadaptin (SLC4A1AP), found in Homo sapiens (Human).